The following is a 1006-amino-acid chain: Serine/threonine-protein phosphatase BSL3 (1006 aa).

The segment at 1 to 67 (MDLDSSMVPE…QQQQQPQVTA (67 aa)) is disordered. Low complexity-rich tracts occupy residues 38–47 (SESESASLTP) and 54–67 (QQQQ…QVTA). Kelch repeat units follow at residues 138-184 (TSAG…VATA), 242-290 (YLMA…TASA), 295-345 (LLLL…VFVN), 351-398 (SGGA…DAAG), and 419-465 (LIFI…TPPG). 2 disordered regions span residues 454–494 (AAAA…LGSP) and 552–579 (GEVE…IKPD). The residue at position 616 (S616) is a Phosphoserine. The Mn(2+) site is built by D709, H711, D743, and N775. H776 functions as the Proton donor in the catalytic mechanism. Residues H828 and H907 each contribute to the Mn(2+) site. Position 964 is a phosphoserine (S964). The tract at residues 982 to 1006 (NVNRPPTPTRGRPQNPNDRGSLAWI) is disordered.

This sequence belongs to the PPP phosphatase family. BSU subfamily. Requires Mn(2+) as cofactor. As to expression, expressed throughout the plant, with a higher level in younger parts.

Its subcellular location is the nucleus. It carries out the reaction O-phospho-L-seryl-[protein] + H2O = L-seryl-[protein] + phosphate. The catalysed reaction is O-phospho-L-threonyl-[protein] + H2O = L-threonyl-[protein] + phosphate. Functionally, phosphatase involved in elongation process, probably by acting as a regulator of brassinolide signaling. The chain is Serine/threonine-protein phosphatase BSL3 (BSL3) from Arabidopsis thaliana (Mouse-ear cress).